A 265-amino-acid chain; its full sequence is Orotidine 5'-phosphate decarboxylase (265 aa).

Substrate contacts are provided by residues Asp-37, 59 to 61 (KTH), 91 to 100 (DRKFADIGNT), Tyr-217, and Arg-235. Lys-93 functions as the Proton donor in the catalytic mechanism.

It belongs to the OMP decarboxylase family.

The enzyme catalyses orotidine 5'-phosphate + H(+) = UMP + CO2. It functions in the pathway pyrimidine metabolism; UMP biosynthesis via de novo pathway; UMP from orotate: step 2/2. The protein is Orotidine 5'-phosphate decarboxylase (URA3) of Candida glabrata (strain ATCC 2001 / BCRC 20586 / JCM 3761 / NBRC 0622 / NRRL Y-65 / CBS 138) (Yeast).